Reading from the N-terminus, the 496-residue chain is Bifunctional protein HldE (496 aa).

Residues 1–335 form a ribokinase region; the sequence is MIKHNPPSPE…GALFRSHGPT (335 aa). 211–214 provides a ligand contact to ATP; it reads NRKE. Asp280 is an active-site residue. Residues 363–496 are cytidylyltransferase; sequence FTNGCFDILH…IGKLRAGSTS (134 aa).

It in the N-terminal section; belongs to the carbohydrate kinase PfkB family. The protein in the C-terminal section; belongs to the cytidylyltransferase family. In terms of assembly, homodimer.

The enzyme catalyses D-glycero-beta-D-manno-heptose 7-phosphate + ATP = D-glycero-beta-D-manno-heptose 1,7-bisphosphate + ADP + H(+). The catalysed reaction is D-glycero-beta-D-manno-heptose 1-phosphate + ATP + H(+) = ADP-D-glycero-beta-D-manno-heptose + diphosphate. It functions in the pathway nucleotide-sugar biosynthesis; ADP-L-glycero-beta-D-manno-heptose biosynthesis; ADP-L-glycero-beta-D-manno-heptose from D-glycero-beta-D-manno-heptose 7-phosphate: step 1/4. Its pathway is nucleotide-sugar biosynthesis; ADP-L-glycero-beta-D-manno-heptose biosynthesis; ADP-L-glycero-beta-D-manno-heptose from D-glycero-beta-D-manno-heptose 7-phosphate: step 3/4. In terms of biological role, catalyzes the phosphorylation of D-glycero-D-manno-heptose 7-phosphate at the C-1 position to selectively form D-glycero-beta-D-manno-heptose-1,7-bisphosphate. Its function is as follows. Catalyzes the ADP transfer from ATP to D-glycero-beta-D-manno-heptose 1-phosphate, yielding ADP-D-glycero-beta-D-manno-heptose. In Mesorhizobium japonicum (strain LMG 29417 / CECT 9101 / MAFF 303099) (Mesorhizobium loti (strain MAFF 303099)), this protein is Bifunctional protein HldE.